The chain runs to 308 residues: MQIYPLRFVPNKINFDFMNFKKVSYSFSIILSLISLIWIGIYKFNFGIDFVGGIVIEVRLDRAPDLPKMRAVLSALGIGEVVLQNFESEHDLSIRFGSSSEENLMKNIDIIKTSLRNNFPYNFEYRKVDFVGPQVGRHLIEAGAMAMLFSFLAIMVYIGVRFEWYFGFGILIALVHDVILALGFMSITKLDFNLSTIAAVLTIIGYSVNDSVVIYDRIRENLRKYHKKNITEIINLSINETLSRTILTVITTLLANLALILFGGKAIHSFSVLVFFGIIAGTYSSIFISAPILTIFANRKFNKKVIER.

Helical transmembrane passes span Val-23–Tyr-42, Ile-140–Val-160, Trp-164–Phe-184, Leu-194–Ile-214, Ile-246–Ala-266, and Val-272–Ile-292.

It belongs to the SecD/SecF family. SecF subfamily. As to quaternary structure, forms a complex with SecD. Part of the essential Sec protein translocation apparatus which comprises SecA, SecYEG and auxiliary proteins SecDF-YajC and YidC.

It localises to the cell inner membrane. Part of the Sec protein translocase complex. Interacts with the SecYEG preprotein conducting channel. SecDF uses the proton motive force (PMF) to complete protein translocation after the ATP-dependent function of SecA. In Rickettsia typhi (strain ATCC VR-144 / Wilmington), this protein is Protein translocase subunit SecF.